The sequence spans 96 residues: Neutrophil defensin 3 (96 aa).

The first 19 residues, 1–19 (MRTLVILAAILLVALQAQA), serve as a signal peptide directing secretion. Positions 20-66 (EPLQARTDEATAAQEQIPTDNPEVVVSLAWDESLAPKDSVPGLRKNM) are excised as a propeptide. Disulfide bonds link Cys-68/Cys-96, Cys-70/Cys-85, and Cys-75/Cys-95.

The protein resides in the secreted. Functionally, has bacteriostatic activity against Gram-positive bacteria S.aureus and L.monocytogenes and Gram-negative bacterium E.coli and antifungal activity against C.neoformans. This is Neutrophil defensin 3 from Macaca mulatta (Rhesus macaque).